A 230-amino-acid polypeptide reads, in one-letter code: RNA chaperone ProQ (230 aa).

Residues 104–176 (AEAKARVQAQ…APRQNTEKLT (73 aa)) are disordered. Over residues 115-132 (AEQRAKKREAEGDKETSK) the composition is skewed to basic and acidic residues.

It belongs to the ProQ family.

The protein resides in the cytoplasm. Functionally, RNA chaperone with significant RNA binding, RNA strand exchange and RNA duplexing activities. May regulate ProP activity through an RNA-based, post-transcriptional mechanism. This is RNA chaperone ProQ from Proteus mirabilis (strain HI4320).